The primary structure comprises 432 residues: Trigger factor (432 aa).

A PPIase FKBP-type domain is found at 161-246 (EDRVTIDFTG…LKKVEERELP (86 aa)).

It belongs to the FKBP-type PPIase family. Tig subfamily. As to quaternary structure, homodimer and monomer. In vivo most of the ribosomes are in complex with monomeric TF. Uncomplexed TF, however, is in a monomer-dimer equilibrium with approximately two thirds of TF existing in a dimeric state.

The protein localises to the cytoplasm. The catalysed reaction is [protein]-peptidylproline (omega=180) = [protein]-peptidylproline (omega=0). Involved in protein export. Acts as a chaperone by maintaining the newly synthesized protein in an open conformation. Functions as a peptidyl-prolyl cis-trans isomerase. The polypeptide is Trigger factor (Escherichia fergusonii (strain ATCC 35469 / DSM 13698 / CCUG 18766 / IAM 14443 / JCM 21226 / LMG 7866 / NBRC 102419 / NCTC 12128 / CDC 0568-73)).